The following is a 661-amino-acid chain: DNA cross-link repair protein PSO2/SNM1 (661 aa).

The disordered stretch occupies residues 1–44 (MSRKSIVQIRRSEVKRKRSSTASSTSEGKTLHKNTHTSSKRQRT). The segment covering 31 to 43 (LHKNTHTSSKRQR) has biased composition (basic residues). The UBZ4-type zinc finger occupies 144 to 174 (VIQCPICLENLSHLELYERETHCDTCIGSDP). Zn(2+) contacts are provided by Cys147, Cys150, His165, and Cys169.

The protein belongs to the DNA repair metallo-beta-lactamase (DRMBL) family.

The protein resides in the nucleus. In terms of biological role, required for DNA interstrand cross-link repair. This requires cleavage of cross-linked DNA to generate DNA double strand breaks (DSBs). This protein has 5' exonuclease activity on single-stranded and double-stranded DNA, which appears to be necessary for the processing of DNA double strand breaks prior to ligation. This Saccharomyces cerevisiae (strain ATCC 204508 / S288c) (Baker's yeast) protein is DNA cross-link repair protein PSO2/SNM1 (PSO2).